The following is a 229-amino-acid chain: MAKKKAFIPFFYFTSIVFLPWLISLCCNKSLKTWITNWWNTRQCETFLNDIQEKSVLEKFIQLEDLFQLDEMIKEYPETDLQQFRLGIHKETIQFIKIHNEYRIHTILHFSTNLISFVILSGYSFWAKEKLFILNSWVQEFLYNLSDTIKAFSILLVTDLCIGFHSPHGWELMIGYIYKDFGFAHYEQILSGLVSTFPVILDTIFKYWIFRYLNRVSPSLVVIYHAIND.

The next 3 helical transmembrane spans lie at 6–26 (AFIP…ISLC), 107–127 (ILHF…SFWA), and 189–209 (ILSG…KYWI).

This sequence belongs to the CemA family.

The protein resides in the plastid. The protein localises to the chloroplast inner membrane. The catalysed reaction is K(+)(in) + H(+)(out) = K(+)(out) + H(+)(in). Contributes to K(+)/H(+) antiport activity by supporting proton efflux to control proton extrusion and homeostasis in chloroplasts in a light-dependent manner to modulate photosynthesis. Prevents excessive induction of non-photochemical quenching (NPQ) under continuous-light conditions. Indirectly promotes efficient inorganic carbon uptake into chloroplasts. This Crucihimalaya wallichii (Rock-cress) protein is Potassium/proton antiporter CemA.